The following is a 1284-amino-acid chain: A-type inclusion protein A25 homolog (1284 aa).

The tract at residues 340-383 (KPITNTGIEEPHATGGDKEEQEQQPVKVVQSKPDDGITPYNPFE) is disordered. The segment covering 348–357 (EEPHATGGDK) has biased composition (basic and acidic residues). 10 tandem repeats follow at residues 611-637 (VRRE…RNQE), 638-665 (DTQE…SGGG), 666-689 (NLTE…ECRG), 690-720 (NATE…NNAD), 721-751 (TERE…SNAD), 752-780 (MERE…GNGT), 781-811 (SSEE…ELYS), 812-842 (AYKS…KTDS), 843-871 (YYRR…TNHA), and 872-912 (KYID…REIE). The tract at residues 611-912 (VRRELEEERR…DMDQYKREIE (302 aa)) is 10 X approximate tandem repeats. Residues 1169–1234 (PLTTEDTEPK…PPKPETPQIS (66 aa)) form a disordered region. Residues 1180–1192 (VEVVPPSSDVTEP) are compositionally biased toward low complexity. The segment covering 1211–1221 (SEYQTSVSQVA) has biased composition (polar residues).

Belongs to the poxviridae A25 protein family. In terms of assembly, interacts (via N-terminus) with protein A26.

The protein resides in the virion. In terms of biological role, structural protein that forms a matrix surrounding the mature virion (MV) through interaction with protein A26. Presence of protein A25 in the virion structurally prevents direct virus-cell fusion mechanism. This chain is A-type inclusion protein A25 homolog (ATI), found in Apodemus sylvaticus (European woodmouse).